We begin with the raw amino-acid sequence, 358 residues long: Chorismate synthase (358 aa).

Arg46 provides a ligand contact to NADP(+). FMN contacts are provided by residues 123–125 (RSS), 235–236 (NA), Gly275, 290–294 (KATPS), and Arg316.

Belongs to the chorismate synthase family. Homotetramer. FMNH2 serves as cofactor.

It carries out the reaction 5-O-(1-carboxyvinyl)-3-phosphoshikimate = chorismate + phosphate. Its pathway is metabolic intermediate biosynthesis; chorismate biosynthesis; chorismate from D-erythrose 4-phosphate and phosphoenolpyruvate: step 7/7. Functionally, catalyzes the anti-1,4-elimination of the C-3 phosphate and the C-6 proR hydrogen from 5-enolpyruvylshikimate-3-phosphate (EPSP) to yield chorismate, which is the branch point compound that serves as the starting substrate for the three terminal pathways of aromatic amino acid biosynthesis. This reaction introduces a second double bond into the aromatic ring system. The protein is Chorismate synthase of Aliarcobacter butzleri (strain RM4018) (Arcobacter butzleri).